Here is a 492-residue protein sequence, read N- to C-terminus: N-succinylglutamate 5-semialdehyde dehydrogenase (492 aa).

225–230 lines the NAD(+) pocket; that stretch reads GSSNTG. Residues E248 and C282 contribute to the active site.

Belongs to the aldehyde dehydrogenase family. AstD subfamily.

The enzyme catalyses N-succinyl-L-glutamate 5-semialdehyde + NAD(+) + H2O = N-succinyl-L-glutamate + NADH + 2 H(+). It participates in amino-acid degradation; L-arginine degradation via AST pathway; L-glutamate and succinate from L-arginine: step 4/5. Functionally, catalyzes the NAD-dependent reduction of succinylglutamate semialdehyde into succinylglutamate. This Colwellia psychrerythraea (strain 34H / ATCC BAA-681) (Vibrio psychroerythus) protein is N-succinylglutamate 5-semialdehyde dehydrogenase.